The chain runs to 2171 residues: DExH-box ATP-dependent RNA helicase DExH12 (2171 aa).

Disordered stretches follow at residues 24-80 (SLVL…KERD), 218-267 (EENE…NEGT), and 383-426 (TAKE…ESGW). Composition is skewed to basic and acidic residues over residues 31 to 40 (NRPRDTHEPT) and 50 to 80 (IDPRSFGDRVAKGRPQELEDKLKKSKKKERD). Residues 218-242 (EENEEDDEESDPDMVEEDDDEEDDE) show a composition bias toward acidic residues. Residues 383–423 (TAKEREENLQKSINEEARRLKDETGGDGGRGRRDVADRDSE) are compositionally biased toward basic and acidic residues. A Helicase ATP-binding 1 domain is found at 514-697 (DTALFKAENI…FLRVDLKKGL (184 aa)). An ATP-binding site is contributed by 527 to 534 (APTGAGKT). Positions 639 to 642 (DEIH) match the DEIH box motif. Residues 731 to 941 (LCYQKVLAGA…GTVQNAREAC (211 aa)) enclose the Helicase C-terminal 1 domain. The region spanning 1006–1308 (TDLGRIASYY…WLGSETVLPV (303 aa)) is the SEC63 1 domain. A Helicase ATP-binding 2 domain is found at 1360 to 1537 (TVLYNTNDNV…WIGASSHGLF (178 aa)). ATP is bound at residue 1373–1380 (APTGSGKT). Positions 1479–1482 (DELH) match the DELH box motif. Residues 1574-1779 (AIVQHAKNKK…GVIENKQDAV (206 aa)) form the Helicase C-terminal 2 domain. One can recognise an SEC63 2 domain in the interval 1839 to 2157 (PLNLGMIASY…LGCDQEYSFS (319 aa)).

This sequence belongs to the DExH box helicase family. Interacts with CLO.

The protein resides in the nucleus. The catalysed reaction is ATP + H2O = ADP + phosphate + H(+). RNA helicase that plays an essential role in pre-mRNA splicing as component of the U5 snRNP and U4/U6-U5 tri-snRNP complexes. Involved in spliceosome assembly, activation and disassembly. In Arabidopsis thaliana (Mouse-ear cress), this protein is DExH-box ATP-dependent RNA helicase DExH12.